Here is a 705-residue protein sequence, read N- to C-terminus: Beta-xylosidase (705 aa).

It belongs to the glycosyl hydrolase 52 family.

It carries out the reaction Hydrolysis of (1-&gt;4)-beta-D-xylans, to remove successive D-xylose residues from the non-reducing termini.. It functions in the pathway glycan degradation; xylan degradation. The chain is Beta-xylosidase (xylA) from Geobacillus stearothermophilus (Bacillus stearothermophilus).